The primary structure comprises 314 residues: tRNA pseudouridine synthase B (314 aa).

Histidine 43 provides a ligand contact to substrate. Aspartate 48 serves as the catalytic Nucleophile. The substrate site is built by tyrosine 76, tyrosine 179, and leucine 200.

It belongs to the pseudouridine synthase TruB family. Type 1 subfamily.

It carries out the reaction uridine(55) in tRNA = pseudouridine(55) in tRNA. Responsible for synthesis of pseudouridine from uracil-55 in the psi GC loop of transfer RNAs. This is tRNA pseudouridine synthase B from Cronobacter sakazakii (strain ATCC BAA-894) (Enterobacter sakazakii).